A 257-amino-acid polypeptide reads, in one-letter code: Snake venom serine protease KN2 (257 aa).

A signal peptide spans 1 to 18 (MVLIRVLANLLILQLSYA). The propeptide occupies 19–24 (QKSSEL). A Peptidase S1 domain is found at 25–248 (VIGGHPCNIN…HLDWIKSIIA (224 aa)). 6 cysteine pairs are disulfide-bonded: Cys-31–Cys-162, Cys-49–Cys-65, Cys-97–Cys-255, Cys-141–Cys-209, Cys-173–Cys-188, and Cys-199–Cys-224. Catalysis depends on charge relay system residues His-64 and Asp-109. 2 N-linked (GlcNAc...) asparagine glycosylation sites follow: Asn-120 and Asn-121. Ser-203 acts as the Charge relay system in catalysis.

This sequence belongs to the peptidase S1 family. Snake venom subfamily. In terms of assembly, monomer. Expressed by the venom gland.

It is found in the secreted. Snake venom serine protease that may act in the hemostasis system of the prey. This is Snake venom serine protease KN2 from Trimeresurus stejnegeri (Chinese green tree viper).